Consider the following 94-residue polypeptide: Long neurotoxin LNTX1 (94 aa).

The signal sequence occupies residues 1–21; sequence MKILLLTLVVVTIMCLDLGYT. Intrachain disulfides connect cysteine 24–cysteine 43, cysteine 36–cysteine 64, cysteine 49–cysteine 53, cysteine 68–cysteine 79, and cysteine 80–cysteine 85.

The protein belongs to the three-finger toxin family. Long-chain subfamily. Type II alpha-neurotoxin sub-subfamily. In terms of assembly, monomer. Expressed by the venom gland.

Its subcellular location is the secreted. In terms of biological role, binds with high affinity to muscular (alpha-1/CHRNA1) and neuronal (alpha-7/CHRNA7) nicotinic acetylcholine receptor (nAChR) and inhibits acetylcholine from binding to the receptor, thereby impairing neuromuscular and neuronal transmission. Recombinant LNTX1 leads to a functional block of the muscle-type acetylcholine receptors. Has a cytotoxic activity. This is Long neurotoxin LNTX1 from Ophiophagus hannah (King cobra).